Here is a 626-residue protein sequence, read N- to C-terminus: Chaperone protein HtpG (626 aa).

The segment at 1–341 (METKQFKAES…SEDLSLNISR (341 aa)) is a; substrate-binding. The b stretch occupies residues 342–552 (EILQHDRQLK…EGELSIEMEK (211 aa)). The segment at 490-509 (DLGIEGEEKENTSNSDDKEN) is disordered. A compositionally biased stretch (basic and acidic residues) spans 498 to 509 (KENTSNSDDKEN). The c stretch occupies residues 553-626 (VLNAMPNNQN…FTNNICKIMK (74 aa)).

This sequence belongs to the heat shock protein 90 family. In terms of assembly, homodimer.

The protein resides in the cytoplasm. Molecular chaperone. Has ATPase activity. The chain is Chaperone protein HtpG from Clostridium botulinum (strain ATCC 19397 / Type A).